A 239-amino-acid chain; its full sequence is Lactate utilization protein A (239 aa).

It belongs to the LutA/YkgE family.

Its function is as follows. Is involved in L-lactate degradation and allows cells to grow with lactate as the sole carbon source. This chain is Lactate utilization protein A, found in Geobacillus kaustophilus (strain HTA426).